The primary structure comprises 324 residues: Cytosolic sulfotransferase 13 (324 aa).

Residue 76-81 participates in 3'-phosphoadenylyl sulfate binding; sequence KSGTTW. The Proton acceptor role is filled by histidine 134. 3'-phosphoadenylyl sulfate-binding positions include arginine 156, serine 164, tyrosine 222, and 288–290; that span reads RKG.

The protein belongs to the sulfotransferase 1 family.

It localises to the cytoplasm. Sulfotransferase that utilizes 3'-phospho-5'-adenylyl sulfate (PAPS) as sulfonate donor. This is Cytosolic sulfotransferase 13 (SOT13) from Arabidopsis thaliana (Mouse-ear cress).